An 86-amino-acid polypeptide reads, in one-letter code: MYPAVVLLLLLLVEQAAALGEPQLCYILDAILFLYGIILTLLYCRLKIQVRKATVASYEKPDGIYTGLSTRNQETYETLKHEKPPQ.

The first 18 residues, 1–18 (MYPAVVLLLLLLVEQAAA), serve as a signal peptide directing secretion. Topologically, residues 19 to 23 (LGEPQ) are extracellular. Residues 24–44 (LCYILDAILFLYGIILTLLYC) traverse the membrane as a helical segment. The Cytoplasmic portion of the chain corresponds to 45-86 (RLKIQVRKATVASYEKPDGIYTGLSTRNQETYETLKHEKPPQ). The region spanning 54–82 (TVASYEKPDGIYTGLSTRNQETYETLKHE) is the ITAM domain. Position 65 is a phosphotyrosine (tyrosine 65). Serine 69 is subject to Phosphoserine. A Phosphotyrosine modification is found at tyrosine 76. Threonine 78 carries the phosphothreonine modification.

Belongs to the CD3Z/FCER1G family. As to quaternary structure, igE Fc receptor is a tetramer of an alpha chain, a beta chain, and two disulfide linked gamma chains. Associates with FCGR1A; forms a functional signaling complex. The signaling subunit of immunoglobulin gamma (IgG) Fc receptor complex. As a homodimer or a heterodimer of CD247 and FCER1G, associates with the ligand binding subunit FCGR3A to form a functional receptor complex. Associates with CLEC6A. Interacts with CLEC4E. Interacts (via ITAM domain) with SYK (via SH2 domains); activates SYK, enabling integrin-mediated activation of neutrophils and macrophages. Interacts with CSF2RB and recruits SYK in response to IL3 stimulation; this interaction is direct. Interacts with CD300LH; the interaction may be indirect. Interacts with CD300LD. Interacts with TARM1.

It localises to the cell membrane. Adapter protein containing an immunoreceptor tyrosine-based activation motif (ITAM) that transduces activation signals from various immunoreceptors. As a component of the high-affinity immunoglobulin E (IgE) receptor, mediates allergic inflammatory signaling in mast cells. As a constitutive component of interleukin-3 receptor complex, selectively mediates interleukin 4/IL4 production by basophils priming T-cells toward effector T-helper 2 subset. Associates with pattern recognition receptors CLEC4D and CLEC4E to form a functional signaling complex in myeloid cells. Binding of mycobacterial trehalose 6,6'-dimycolate (TDM) to this receptor complex leads to phosphorylation of ITAM, triggering activation of SYK, CARD9 and NF-kappa-B, consequently driving maturation of antigen-presenting cells and shaping antigen-specific priming of T-cells toward effector T-helper 1 and T-helper 17 cell subtypes. May function cooperatively with other activating receptors. Functionally linked to integrin beta-2/ITGB2-mediated neutrophil activation. Also involved in integrin alpha-2/ITGA2-mediated platelet activation. The sequence is that of High affinity immunoglobulin epsilon receptor subunit gamma (FCER1G) from Cavia porcellus (Guinea pig).